Consider the following 695-residue polypeptide: RING finger protein 145 (695 aa).

Helical transmembrane passes span 53–73 (YLAL…LTLP), 77–97 (LAKL…HQIS), 123–143 (FITA…VMKT), 146–166 (IWLF…VPIE), 168–188 (IVVI…YFLA), 225–245 (LVVP…QIYT), 275–295 (YSLL…LTLC), 316–336 (TEGV…LQVV), 340–360 (FLLS…MLEI), 384–404 (SLCL…CQFF), 410–430 (LLII…TLFI), 460–480 (LLEF…TVFG), and 482–502 (WTVM…WLRA). Residues 537–575 (CSICYQDMNSAVITPCSHFFHPGCLKKWLYVQETCPLCH) form an RING-type; atypical zinc finger. Positions 585-603 (ATGESGSSTNPVSEQSATN) are enriched in polar residues. Positions 585–610 (ATGESGSSTNPVSEQSATNPPLGPVS) are disordered.

It localises to the membrane. The polypeptide is RING finger protein 145 (rnf145) (Xenopus tropicalis (Western clawed frog)).